Reading from the N-terminus, the 685-residue chain is MAARAAGSGGWEVVKRSRRPGASSGGRGGGGDRRALGEANGVWKYDLSSPIQPTSTLYERGFEKIMKRQNKEQVPPPAAESKKPVNKKQPKKVTAVASQNQKQGPFRSLEDALKALDVAALQKELDKSQSVFTGNPSVWLKDLASYLNYKLQTPRMEPTLSQYPHDYPYSLVSRELRGIIRGLLTKAAGSVELFFDHCLFTMLQELDKTPGESLHGYRICIQAILQDKPKIVTSNLDKFLELLRSHQSRPAKCLTIMWALGQAGFTNLTEGLKVWLGIMLPVLGIKSLSPFAIAYLDRLLLMYPNLTKGFGMIGPKDFFPLLDFAYMPNNSLSPSLQEQLCQLFPRLKVLAFGAKPESSLHTYFPSFLSRATPSCPAAMKKELLASLTQCLTVDPLSTSVWRQLYPKHLSQSSLLLEHLLTSWEQIPKKARKCLQETIQSFTLTNQELLKKGSGSNEHVVTCDTACKGLLQQARGPRPPWARLLLLLLVFAVGFLCHDLRSHSSFQASLTGRLLQSSGLLPVAQQVCAKLYSYSLQSYNWLQETLPACGSYLLAVVQPSLQLAWTYIYATFSFLSAYCASYLAFFSDSLAGVLQRVQLPEALHQLFHSLKELLLLFYHSVLLPMWHLLLAALAQVQEHCHEACRGEMTWDCIKTQFSTAAHWTWLCLQDVTVAFLDWALTMISQQ.

Disordered stretches follow at residues 1-36 (MAAR…RRAL) and 66-104 (MKRQ…QKQG). N-acetylalanine is present on Ala-2. Asn-267 and Asn-305 each carry an N-linked (GlcNAc...) asparagine glycan. Helical transmembrane passes span 479–499 (PWAR…CHDL) and 612–632 (LLLL…LAAL).

Belongs to the TMEM214 family. As to quaternary structure, constitutively interacts with CASP4; required for the localization of procaspase 4 to the ER.

It is found in the endoplasmic reticulum membrane. In terms of biological role, critical mediator, in cooperation with CASP4, of endoplasmic reticulum-stress induced apoptosis. Required or the activation of CASP4 following endoplasmic reticulum stress. This is Transmembrane protein 214 (Tmem214) from Rattus norvegicus (Rat).